Here is a 403-residue protein sequence, read N- to C-terminus: S-adenosylmethionine synthase (403 aa).

ATP is bound at residue His-17. Asp-19 is a Mg(2+) binding site. Glu-45 contacts K(+). The L-methionine site is built by Glu-58 and Gln-104. The segment at 104–114 (QSSDIAQGVNT) is flexible loop. ATP is bound by residues 179–181 (DGK), 250–251 (KF), Asp-259, 265–266 (RK), Ala-282, and Lys-286. Residue Asp-259 coordinates L-methionine. Residue Lys-290 coordinates L-methionine.

It belongs to the AdoMet synthase family. Homotetramer; dimer of dimers. Requires Mg(2+) as cofactor. K(+) serves as cofactor.

Its subcellular location is the cytoplasm. The enzyme catalyses L-methionine + ATP + H2O = S-adenosyl-L-methionine + phosphate + diphosphate. Its pathway is amino-acid biosynthesis; S-adenosyl-L-methionine biosynthesis; S-adenosyl-L-methionine from L-methionine: step 1/1. Functionally, catalyzes the formation of S-adenosylmethionine (AdoMet) from methionine and ATP. The overall synthetic reaction is composed of two sequential steps, AdoMet formation and the subsequent tripolyphosphate hydrolysis which occurs prior to release of AdoMet from the enzyme. The polypeptide is S-adenosylmethionine synthase (Mycobacterium leprae (strain Br4923)).